We begin with the raw amino-acid sequence, 364 residues long: tRNA 2-selenouridine synthase (364 aa).

The Rhodanese domain maps to 14–137 (LIADTPIIDV…LRQTAIQATI (124 aa)). Cysteine 97 serves as the catalytic S-selanylcysteine intermediate.

Belongs to the SelU family. In terms of assembly, monomer.

It catalyses the reaction 5-methylaminomethyl-2-thiouridine(34) in tRNA + selenophosphate + (2E)-geranyl diphosphate + H2O + H(+) = 5-methylaminomethyl-2-selenouridine(34) in tRNA + (2E)-thiogeraniol + phosphate + diphosphate. The enzyme catalyses 5-methylaminomethyl-2-thiouridine(34) in tRNA + (2E)-geranyl diphosphate = 5-methylaminomethyl-S-(2E)-geranyl-thiouridine(34) in tRNA + diphosphate. It carries out the reaction 5-methylaminomethyl-S-(2E)-geranyl-thiouridine(34) in tRNA + selenophosphate + H(+) = 5-methylaminomethyl-2-(Se-phospho)selenouridine(34) in tRNA + (2E)-thiogeraniol. The catalysed reaction is 5-methylaminomethyl-2-(Se-phospho)selenouridine(34) in tRNA + H2O = 5-methylaminomethyl-2-selenouridine(34) in tRNA + phosphate. In terms of biological role, involved in the post-transcriptional modification of the uridine at the wobble position (U34) of tRNA(Lys), tRNA(Glu) and tRNA(Gln). Catalyzes the conversion of 2-thiouridine (S2U-RNA) to 2-selenouridine (Se2U-RNA). Acts in a two-step process involving geranylation of 2-thiouridine (S2U) to S-geranyl-2-thiouridine (geS2U) and subsequent selenation of the latter derivative to 2-selenouridine (Se2U) in the tRNA chain. In Escherichia coli O6:K15:H31 (strain 536 / UPEC), this protein is tRNA 2-selenouridine synthase.